A 189-amino-acid polypeptide reads, in one-letter code: Interferon alpha-8 (189 aa).

The first 23 residues, 1–23, serve as a signal peptide directing secretion; it reads MALTFYLLVALVVLSYKSFSSLG. Cystine bridges form between Cys24/Cys122 and Cys52/Cys162.

It belongs to the alpha/beta interferon family.

Its subcellular location is the secreted. In terms of biological role, produced by macrophages, IFN-alpha have antiviral activities. Interferon stimulates the production of two enzymes: a protein kinase and an oligoadenylate synthetase. This is Interferon alpha-8 (IFNA8) from Homo sapiens (Human).